A 373-amino-acid chain; its full sequence is Histidinol-phosphate aminotransferase (373 aa).

Position 233 is an N6-(pyridoxal phosphate)lysine (K233).

Belongs to the class-II pyridoxal-phosphate-dependent aminotransferase family. Histidinol-phosphate aminotransferase subfamily. As to quaternary structure, homodimer. The cofactor is pyridoxal 5'-phosphate.

It catalyses the reaction L-histidinol phosphate + 2-oxoglutarate = 3-(imidazol-4-yl)-2-oxopropyl phosphate + L-glutamate. It participates in amino-acid biosynthesis; L-histidine biosynthesis; L-histidine from 5-phospho-alpha-D-ribose 1-diphosphate: step 7/9. The protein is Histidinol-phosphate aminotransferase of Nitratidesulfovibrio vulgaris (strain ATCC 29579 / DSM 644 / CCUG 34227 / NCIMB 8303 / VKM B-1760 / Hildenborough) (Desulfovibrio vulgaris).